Reading from the N-terminus, the 200-residue chain is Probable GTP-binding protein EngB (200 aa).

Residues 25–199 form the EngB-type G domain; it reads SGYEVAFAGR…ISVLDRWYEW (175 aa). GTP is bound by residues 33–40, 60–64, 78–81, 145–148, and 178–180; these read GRSNAGKS, GRTQL, DLPG, TKAD, and FSS. Positions 40 and 62 each coordinate Mg(2+).

It belongs to the TRAFAC class TrmE-Era-EngA-EngB-Septin-like GTPase superfamily. EngB GTPase family. Mg(2+) is required as a cofactor.

Functionally, necessary for normal cell division and for the maintenance of normal septation. This chain is Probable GTP-binding protein EngB, found in Legionella pneumophila (strain Paris).